A 248-amino-acid chain; its full sequence is tRNA (guanine-N(1)-)-methyltransferase (248 aa).

Residues glycine 113 and 133–138 (IGDFVL) contribute to the S-adenosyl-L-methionine site.

This sequence belongs to the RNA methyltransferase TrmD family. Homodimer.

Its subcellular location is the cytoplasm. The enzyme catalyses guanosine(37) in tRNA + S-adenosyl-L-methionine = N(1)-methylguanosine(37) in tRNA + S-adenosyl-L-homocysteine + H(+). In terms of biological role, specifically methylates guanosine-37 in various tRNAs. In Dehalococcoides mccartyi (strain ATCC BAA-2266 / KCTC 15142 / 195) (Dehalococcoides ethenogenes (strain 195)), this protein is tRNA (guanine-N(1)-)-methyltransferase.